The following is an 863-amino-acid chain: DNA replication licensing factor mcm4 (863 aa).

The disordered stretch occupies residues 1–121; the sequence is MSSPTSTPSR…ARQRPDLGSA (121 aa). Composition is skewed to polar residues over residues 54–64 and 78–99; these read SPSGDLQSPSG and SALQ…SSRV. A C4-type zinc finger spans residues 306 to 331; that stretch reads CQVCAFTTRVEIDRGRISEPSVCKHC. Residues 458–667 form the MCM domain; sequence IYERLASALA…YDRRLAHHLV (210 aa). ATP-binding residues include Y471, R497, K516, S517, N618, R643, R732, and E735. An Arginine finger motif is present at residues 642-645; that stretch reads SRFD.

This sequence belongs to the MCM family. As to quaternary structure, component of the mcm2-7 complex (RLF-M). The complex forms a toroidal hexameric ring with the proposed subunit order mcm2-mcm6-mcm4-mcm7-mcm3-mcm5. The heterodimer of mmcm3/mcm5 interacts with mcm4, mmcm6, mcm7 and weakly with mcm2. Component of the CMG helicase complex, composed of the mcm2-7 complex, the GINS complex and cdc45. In terms of processing, hyperphosphorylated during mitosis in a mechanism requiring cdc2-cyclin B and other kinases. Undergoes dephosphorylation after exiting mitosis, existing in a partially phosphorylated state in the cytosolic interphase mcm complex which associates with the pre-replication complexes (pre-Rcs). Complete dephosphorylation inactivates the mcm complex, preventing its binding to chromatin. Becomes actively phosphorylated during S phase once the mcm complex is assembled on the chromatin. This chromatin-associated phosphorylation occurs during the activation of the pre-Rcs and is independent of cdks. Phosphorylated by the cdc7-dbf4b complex.

It localises to the nucleus. The protein localises to the chromosome. The catalysed reaction is ATP + H2O = ADP + phosphate + H(+). Its function is as follows. Acts as a component of the MCM2-7 complex (MCM complex) which is the replicative helicase essential for 'once per cell cycle' DNA replication initiation and elongation in eukaryotic cells. Core component of CDC45-MCM-GINS (CMG) helicase, the molecular machine that unwinds template DNA during replication, and around which the replisome is built. The active ATPase sites in the MCM2-7 ring are formed through the interaction surfaces of two neighboring subunits such that a critical structure of a conserved arginine finger motif is provided in trans relative to the ATP-binding site of the Walker A box of the adjacent subunit. The six ATPase active sites, however, are likely to contribute differentially to the complex helicase activity. This is DNA replication licensing factor mcm4 from Xenopus tropicalis (Western clawed frog).